The sequence spans 676 residues: DNA ligase (676 aa).

Residues 35 to 39, 84 to 85, and Glu-115 contribute to the NAD(+) site; these read DAVYD and SL. The N6-AMP-lysine intermediate role is filled by Lys-117. Arg-138, Glu-177, Lys-296, and Lys-320 together coordinate NAD(+). Cys-414, Cys-417, Cys-432, and Cys-437 together coordinate Zn(2+). Residues 599–676 enclose the BRCT domain; the sequence is NANLKLVGKT…SEAELLKILA (78 aa).

Belongs to the NAD-dependent DNA ligase family. LigA subfamily. The cofactor is Mg(2+). Mn(2+) serves as cofactor.

It carries out the reaction NAD(+) + (deoxyribonucleotide)n-3'-hydroxyl + 5'-phospho-(deoxyribonucleotide)m = (deoxyribonucleotide)n+m + AMP + beta-nicotinamide D-nucleotide.. Functionally, DNA ligase that catalyzes the formation of phosphodiester linkages between 5'-phosphoryl and 3'-hydroxyl groups in double-stranded DNA using NAD as a coenzyme and as the energy source for the reaction. It is essential for DNA replication and repair of damaged DNA. This chain is DNA ligase, found in Trichormus variabilis (strain ATCC 29413 / PCC 7937) (Anabaena variabilis).